We begin with the raw amino-acid sequence, 357 residues long: Probable dual-specificity RNA methyltransferase RlmN (357 aa).

The Proton acceptor role is filled by E95. One can recognise a Radical SAM core domain in the interval 105 to 343 (KKSSYTLCLS…VSIREERGSD (239 aa)). An intrachain disulfide couples C112 to C348. [4Fe-4S] cluster is bound by residues C119, C123, and C126. S-adenosyl-L-methionine is bound by residues 174 to 175 (GE), S206, 229 to 231 (SLH), and N305. The active-site S-methylcysteine intermediate is the C348.

This sequence belongs to the radical SAM superfamily. RlmN family. [4Fe-4S] cluster serves as cofactor.

It localises to the cytoplasm. The enzyme catalyses adenosine(2503) in 23S rRNA + 2 reduced [2Fe-2S]-[ferredoxin] + 2 S-adenosyl-L-methionine = 2-methyladenosine(2503) in 23S rRNA + 5'-deoxyadenosine + L-methionine + 2 oxidized [2Fe-2S]-[ferredoxin] + S-adenosyl-L-homocysteine. It carries out the reaction adenosine(37) in tRNA + 2 reduced [2Fe-2S]-[ferredoxin] + 2 S-adenosyl-L-methionine = 2-methyladenosine(37) in tRNA + 5'-deoxyadenosine + L-methionine + 2 oxidized [2Fe-2S]-[ferredoxin] + S-adenosyl-L-homocysteine. In terms of biological role, specifically methylates position 2 of adenine 2503 in 23S rRNA and position 2 of adenine 37 in tRNAs. The chain is Probable dual-specificity RNA methyltransferase RlmN from Syntrophomonas wolfei subsp. wolfei (strain DSM 2245B / Goettingen).